The following is a 113-amino-acid chain: Protein ORF3 (113 aa).

2 hydrophobic regions span residues 1-21 and 32-52; these read MGSP…CLCC and AVVG…GLIL. The interaction with host HPX stretch occupies residues 27-67; it reads ASRLAAVVGGAAAVPAVVSGVTGLILSPSPSPIFIQPTPSP. Positions 47-71 are interaction with the capsid protein; that stretch reads VTGLILSPSPSPIFIQPTPSPPMSF. Ser-70 bears the Phosphoserine; by host mark. Positions 71 to 113 are homodimerization, and interaction with host AMBP/bikunin; the sequence is FHNPGLELALDSRPAPLXPLGVTSPSAPPLPPVVDLPQLGLRR. Residues 90 to 113 form a disordered region; that stretch reads LGVTSPSAPPLPPVVDLPQLGLRR. An interaction with host SRC, HCK, FYN, PIK3R3 and GRB2 region spans residues 94-103; it reads SPSAPPLPPV. The PTAP/PSAP motif signature appears at 95 to 98; that stretch reads PSAP.

Belongs to the hepevirus ORF3 protein family. As to quaternary structure, forms homooligomers. Interacts with host SRC, HCK, FYN, PIK3R3 and GRB2 (via SH3 domain); binding does not activate the kinases. Interacts with host AMBP/bikunin and AMBP/alpha-1-microglobulin peptides. Interacts with host HPX/hemopexin. Interacts (when phosphorylated) with capsid protein ORF2. Interacts with host TSG101; this interaction plays a role in viral release from the host cell. Interacts with host SIRPA; this interaction down-regulates the phosphorylation of host IRF3. In terms of processing, palmitoylated in the N-terminus.

The protein resides in the host endoplasmic reticulum membrane. The protein localises to the host cytoplasm. It localises to the host cytoskeleton. It is found in the virion. Its subcellular location is the host cell membrane. Functionally, small multifunctional phosphoprotein involved in virion morphogenesis, egress and counteracting host innate immunity. Plays critical roles in the final steps of viral release by interacting with host TSG101, a member of the vacuolar protein-sorting pathway and using other cellular host proteins involved in vesicle formation pathway. Also acts as a viroporin and forms ion conductive pores allowing viral particle release. Impairs the generation of type I interferon by down-regulating host TLR3 and TLR7 as well as their downstream signaling pathways. Down-regulates the phosphorylation of host IRF3 via the interaction with host SIRP-alpha, thereby inhibiting IFN-I expression. Interacts with host microtubules. The polypeptide is Protein ORF3 (Hepatitis E virus genotype 3 (isolate Human/United States/US2) (HEV-3)).